The primary structure comprises 86 residues: Toxin TdNa7 (86 aa).

Residues 1 to 20 (MTRFVLFLSCFFLIGMVVEC) form the signal peptide. Residues 21 to 83 (KDGYLMGPDG…TWERATNTCG (63 aa)) enclose the LCN-type CS-alpha/beta domain. Intrachain disulfides connect cysteine 31–cysteine 82, cysteine 35–cysteine 57, cysteine 43–cysteine 63, and cysteine 47–cysteine 65. Lysine 84 carries the post-translational modification Lysine amide.

Belongs to the long (4 C-C) scorpion toxin superfamily. Sodium channel inhibitor family. Beta subfamily. Expressed by the venom gland.

Its subcellular location is the secreted. Beta toxins bind voltage-independently at site-4 of sodium channels (Nav) and shift the voltage of activation toward more negative potentials thereby affecting sodium channel activation and promoting spontaneous and repetitive firing. The chain is Toxin TdNa7 from Tityus discrepans (Venezuelan scorpion).